A 460-amino-acid polypeptide reads, in one-letter code: GTPase Der (460 aa).

2 consecutive EngA-type G domains span residues 2–164 and 196–368; these read QSII…HEEF and IRVG…ENFT. Residues 8 to 15, 55 to 59, 116 to 119, 202 to 209, 249 to 253, and 313 to 316 contribute to the GTP site; these read GKPNVGKS, DSGGL, NKVD, GRVNVGKS, DTAGI, and NKWD. The 85-residue stretch at 369 to 453 folds into the KH-like domain; sequence QKIQTSKLNT…PLVIASRKKG (85 aa).

It belongs to the TRAFAC class TrmE-Era-EngA-EngB-Septin-like GTPase superfamily. EngA (Der) GTPase family. As to quaternary structure, associates with the 50S ribosomal subunit.

GTPase that plays an essential role in the late steps of ribosome biogenesis. In Campylobacter jejuni subsp. jejuni serotype O:2 (strain ATCC 700819 / NCTC 11168), this protein is GTPase Der.